Reading from the N-terminus, the 396-residue chain is NADH-quinone oxidoreductase subunit D (396 aa).

Belongs to the complex I 49 kDa subunit family. As to quaternary structure, NDH-1 is composed of 14 different subunits. Subunits NuoB, C, D, E, F, and G constitute the peripheral sector of the complex.

It is found in the cell inner membrane. The enzyme catalyses a quinone + NADH + 5 H(+)(in) = a quinol + NAD(+) + 4 H(+)(out). NDH-1 shuttles electrons from NADH, via FMN and iron-sulfur (Fe-S) centers, to quinones in the respiratory chain. The immediate electron acceptor for the enzyme in this species is believed to be ubiquinone. Couples the redox reaction to proton translocation (for every two electrons transferred, four hydrogen ions are translocated across the cytoplasmic membrane), and thus conserves the redox energy in a proton gradient. The chain is NADH-quinone oxidoreductase subunit D from Bartonella henselae (strain ATCC 49882 / DSM 28221 / CCUG 30454 / Houston 1) (Rochalimaea henselae).